Reading from the N-terminus, the 101-residue chain is uncharacterized protein (101 aa).

The first 18 residues, 1 to 18, serve as a signal peptide directing secretion; it reads MSINALLYVLSLALLIWT. Residues 62 to 82 form a helical membrane-spanning segment; that stretch reads FQFDSIPSSSLSLSPFPFLFF.

The protein resides in the membrane. This is an uncharacterized protein from Saccharomyces cerevisiae (strain ATCC 204508 / S288c) (Baker's yeast).